Reading from the N-terminus, the 332-residue chain is 2,3-diketo-L-gulonate reductase (332 aa).

The active-site Proton donor is the H44. Residues 168–174 (ITMVDMS), 224–225 (WK), and 304–306 (GHE) each bind NAD(+).

This sequence belongs to the LDH2/MDH2 oxidoreductase family. DlgD subfamily. As to quaternary structure, homodimer.

It is found in the cytoplasm. It catalyses the reaction 3-dehydro-L-gulonate + NAD(+) = 2,3-dioxo-L-gulonate + NADH + H(+). It carries out the reaction 3-dehydro-L-gulonate + NADP(+) = 2,3-dioxo-L-gulonate + NADPH + H(+). Its function is as follows. Catalyzes the reduction of 2,3-diketo-L-gulonate in the presence of NADH, to form 3-keto-L-gulonate. This is 2,3-diketo-L-gulonate reductase from Escherichia fergusonii (strain ATCC 35469 / DSM 13698 / CCUG 18766 / IAM 14443 / JCM 21226 / LMG 7866 / NBRC 102419 / NCTC 12128 / CDC 0568-73).